The following is a 200-amino-acid chain: Small ribosomal subunit protein uS4 (200 aa).

A disordered region spans residues 22 to 42; that stretch reads TGKELEKRPYAPGPHGPNQRK. In terms of domain architecture, S4 RNA-binding spans 92 to 152; the sequence is ARLDNLVYRM…EKSRNLAVIK (61 aa).

Belongs to the universal ribosomal protein uS4 family. Part of the 30S ribosomal subunit. Contacts protein S5. The interaction surface between S4 and S5 is involved in control of translational fidelity.

Functionally, one of the primary rRNA binding proteins, it binds directly to 16S rRNA where it nucleates assembly of the body of the 30S subunit. In terms of biological role, with S5 and S12 plays an important role in translational accuracy. This chain is Small ribosomal subunit protein uS4, found in Bacillus cytotoxicus (strain DSM 22905 / CIP 110041 / 391-98 / NVH 391-98).